Reading from the N-terminus, the 503-residue chain is Probable 2-isopropylmalate synthase (503 aa).

The region spanning 8 to 259 is the Pyruvate carboxyltransferase domain; that stretch reads IRVFDTTLRD…KTNIKTEHLF (252 aa). A divalent metal cation is bound by residues Asp17, His197, His199, and Asn233.

It belongs to the alpha-IPM synthase/homocitrate synthase family. As to quaternary structure, homodimer. The cofactor is a divalent metal cation.

The catalysed reaction is 3-methyl-2-oxobutanoate + acetyl-CoA + H2O = (2S)-2-isopropylmalate + CoA + H(+). Its pathway is amino-acid biosynthesis; L-leucine biosynthesis; L-leucine from 3-methyl-2-oxobutanoate: step 1/4. Its function is as follows. Catalyzes the condensation of the acetyl group of acetyl-CoA with 3-methyl-2-oxobutanoate (2-oxoisovalerate) to form 3-carboxy-3-hydroxy-4-methylpentanoate (2-isopropylmalate). In Archaeoglobus fulgidus (strain ATCC 49558 / DSM 4304 / JCM 9628 / NBRC 100126 / VC-16), this protein is Probable 2-isopropylmalate synthase (leuA).